A 311-amino-acid chain; its full sequence is tRNA-cytidine(32) 2-sulfurtransferase (311 aa).

A PP-loop motif motif is present at residues 47–52 (SGGKDS). Residues C122, C125, and C213 each contribute to the [4Fe-4S] cluster site.

Belongs to the TtcA family. As to quaternary structure, homodimer. Mg(2+) serves as cofactor. It depends on [4Fe-4S] cluster as a cofactor.

Its subcellular location is the cytoplasm. It catalyses the reaction cytidine(32) in tRNA + S-sulfanyl-L-cysteinyl-[cysteine desulfurase] + AH2 + ATP = 2-thiocytidine(32) in tRNA + L-cysteinyl-[cysteine desulfurase] + A + AMP + diphosphate + H(+). The protein operates within tRNA modification. Its function is as follows. Catalyzes the ATP-dependent 2-thiolation of cytidine in position 32 of tRNA, to form 2-thiocytidine (s(2)C32). The sulfur atoms are provided by the cysteine/cysteine desulfurase (IscS) system. This Escherichia coli O7:K1 (strain IAI39 / ExPEC) protein is tRNA-cytidine(32) 2-sulfurtransferase.